Reading from the N-terminus, the 447-residue chain is Phosphoglucosamine mutase (447 aa).

The active-site Phosphoserine intermediate is the Ser-88. 4 residues coordinate Mg(2+): Ser-88, Asp-231, Asp-233, and Asp-235. Ser-88 carries the post-translational modification Phosphoserine.

The protein belongs to the phosphohexose mutase family. The cofactor is Mg(2+). Activated by phosphorylation.

The enzyme catalyses alpha-D-glucosamine 1-phosphate = D-glucosamine 6-phosphate. In terms of biological role, catalyzes the conversion of glucosamine-6-phosphate to glucosamine-1-phosphate. This Methanococcus maripaludis (strain C5 / ATCC BAA-1333) protein is Phosphoglucosamine mutase.